The primary structure comprises 520 residues: Type I restriction enzyme EcoR124I/EcoR124II methylase subunit (520 aa).

Residues 10 to 190 are N-terminal domain; that stretch reads AELHRQIWQI…YEFLISNYAA (181 aa). Residues 198-203, 230-232, and glutamate 254 contribute to the S-adenosyl-L-methionine site; these read EFFTPQ and SGS. Positions 198–473 are catalytic domain; the sequence is EFFTPQHVSK…NDYNLSVSSY (276 aa). Residues 481–510 form a C-terminal tail region; the sequence is EIIDIAELNAELKTTVSKIDQLRKDIDAIV.

Belongs to the N(4)/N(6)-methyltransferase family. As to quaternary structure, the type I restriction/modification system is composed of three polypeptides R, M and S; the restriction enzyme has stoichiometry R(2)M(2)S(1) while the methyltransferase is M(2)S(1). There is an equilibrium between R(2)M(2)S(1) and R(1)M(2)S(1); the latter is methylation and translocation proficient but restriction deficient. In terms of assembly, (Microbial infection) Holoenenzyme interacts with Escherichia phage T7 protein Ocr; this interaction leads to the inhibition of the restriction activity, but may still allow methylation and translocation.

It catalyses the reaction a 2'-deoxyadenosine in DNA + S-adenosyl-L-methionine = an N(6)-methyl-2'-deoxyadenosine in DNA + S-adenosyl-L-homocysteine + H(+). Functionally, the subtype gamma methyltransferase (M) subunit of a type I restriction enzyme. The M and S subunits together form a methyltransferase (MTase) that methylates A-3 on the top and bottom strand of the sequence 5'-GAAN(6)RTCG-3' (for EcoR124I) and 5'-GAAN(7)RTCG-3' (for EcoR124II). In the presence of the R subunit the complex can also act as an endonuclease, binding to the same target sequence but cutting the DNA some distance from this site. Whether the DNA is cut or modified depends on the methylation state of the target sequence. When the target site is unmodified, the DNA is cut. When the target site is hemimethylated, the complex acts as a maintenance MTase modifying the DNA so that both strands become methylated. After locating a non-methylated recognition site, the enzyme complex serves as a molecular motor that translocates DNA in an ATP-dependent manner until a collision occurs that triggers cleavage. The R(1)M(2)S(1) complex translocates an average of 555 bp/second on nicked DNA; the R(2)M(2)S(1) complex translocates at double that speed. The 2 R subunit motors are independent and track along the helical pitch of the DNA, inducing positive supercoiling ahead of themselves. This Escherichia coli protein is Type I restriction enzyme EcoR124I/EcoR124II methylase subunit (hsdM).